Reading from the N-terminus, the 288-residue chain is 4-hydroxy-3-methylbut-2-enyl diphosphate reductase (288 aa).

Cysteine 12 is a binding site for [4Fe-4S] cluster. (2E)-4-hydroxy-3-methylbut-2-enyl diphosphate is bound by residues histidine 42 and histidine 77. Histidine 42 and histidine 77 together coordinate dimethylallyl diphosphate. Isopentenyl diphosphate contacts are provided by histidine 42 and histidine 77. Cysteine 99 is a [4Fe-4S] cluster binding site. Histidine 127 is a binding site for (2E)-4-hydroxy-3-methylbut-2-enyl diphosphate. Histidine 127 contacts dimethylallyl diphosphate. Histidine 127 lines the isopentenyl diphosphate pocket. Glutamate 129 (proton donor) is an active-site residue. Threonine 165 contacts (2E)-4-hydroxy-3-methylbut-2-enyl diphosphate. Cysteine 193 is a [4Fe-4S] cluster binding site. The (2E)-4-hydroxy-3-methylbut-2-enyl diphosphate site is built by serine 221, serine 222, asparagine 223, and serine 265. Dimethylallyl diphosphate is bound by residues serine 221, serine 222, asparagine 223, and serine 265. Residues serine 221, serine 222, asparagine 223, and serine 265 each contribute to the isopentenyl diphosphate site.

The protein belongs to the IspH family. It depends on [4Fe-4S] cluster as a cofactor.

It carries out the reaction isopentenyl diphosphate + 2 oxidized [2Fe-2S]-[ferredoxin] + H2O = (2E)-4-hydroxy-3-methylbut-2-enyl diphosphate + 2 reduced [2Fe-2S]-[ferredoxin] + 2 H(+). The catalysed reaction is dimethylallyl diphosphate + 2 oxidized [2Fe-2S]-[ferredoxin] + H2O = (2E)-4-hydroxy-3-methylbut-2-enyl diphosphate + 2 reduced [2Fe-2S]-[ferredoxin] + 2 H(+). It participates in isoprenoid biosynthesis; dimethylallyl diphosphate biosynthesis; dimethylallyl diphosphate from (2E)-4-hydroxy-3-methylbutenyl diphosphate: step 1/1. The protein operates within isoprenoid biosynthesis; isopentenyl diphosphate biosynthesis via DXP pathway; isopentenyl diphosphate from 1-deoxy-D-xylulose 5-phosphate: step 6/6. In terms of biological role, catalyzes the conversion of 1-hydroxy-2-methyl-2-(E)-butenyl 4-diphosphate (HMBPP) into a mixture of isopentenyl diphosphate (IPP) and dimethylallyl diphosphate (DMAPP). Acts in the terminal step of the DOXP/MEP pathway for isoprenoid precursor biosynthesis. This chain is 4-hydroxy-3-methylbut-2-enyl diphosphate reductase, found in Thermoanaerobacter pseudethanolicus (strain ATCC 33223 / 39E) (Clostridium thermohydrosulfuricum).